A 439-amino-acid polypeptide reads, in one-letter code: Taxadien-5-alpha-ol O-acetyltransferase (439 aa).

Active-site proton acceptor residues include His-164 and Asp-373.

The protein belongs to the plant acyltransferase family.

The catalysed reaction is taxa-4(20),11-dien-5alpha-ol + acetyl-CoA = taxa-4(20),11-dien-5alpha-yl acetate + CoA. It participates in alkaloid biosynthesis; taxol biosynthesis; 10-deacetyl-2-debenzoylbaccatin III from taxa-4(20),11-dien-5alpha-ol: step 1/3. The polypeptide is Taxadien-5-alpha-ol O-acetyltransferase (Taxus chinensis (Chinese yew)).